A 125-amino-acid chain; its full sequence is Small ribosomal subunit protein uS12 (125 aa).

At Asp89 the chain carries 3-methylthioaspartic acid.

The protein belongs to the universal ribosomal protein uS12 family. Part of the 30S ribosomal subunit. Contacts proteins S8 and S17. May interact with IF1 in the 30S initiation complex.

Its function is as follows. With S4 and S5 plays an important role in translational accuracy. Functionally, interacts with and stabilizes bases of the 16S rRNA that are involved in tRNA selection in the A site and with the mRNA backbone. Located at the interface of the 30S and 50S subunits, it traverses the body of the 30S subunit contacting proteins on the other side and probably holding the rRNA structure together. The combined cluster of proteins S8, S12 and S17 appears to hold together the shoulder and platform of the 30S subunit. This Clostridium botulinum (strain ATCC 19397 / Type A) protein is Small ribosomal subunit protein uS12.